A 363-amino-acid polypeptide reads, in one-letter code: Neurogenic differentiation factor 2 (363 aa).

The segment at 1 to 116 (MLTRLFKEPS…VRRQKANARE (116 aa)) is disordered. A compositionally biased stretch (basic and acidic residues) spans 28 to 44 (EDSKTKDEEQERCRLGD). Residues 64 to 83 (AGEEDYDEDVDEDDCGEEGD) show a composition bias toward acidic residues. The span at 87-98 (PKKRGPKKRKMT) shows a compositional bias: basic residues. Positions 93–99 (KKRKMTP) match the Nuclear localization signal motif. The bHLH domain occupies 107-159 (VRRQKANARERTRMHDLNSALDNLLKVVPCYSKTQKLSKIETLRLAKNYIWAL).

Efficient DNA binding requires dimerization with another bHLH protein. In terms of tissue distribution, in adult, expressed strongly in brain and more weakly in skin, muscle, eye and ovary.

It localises to the nucleus. In terms of biological role, transcriptional regulator. Appears to mediate neuronal differentiation. The polypeptide is Neurogenic differentiation factor 2 (Danio rerio (Zebrafish)).